We begin with the raw amino-acid sequence, 876 residues long: Leucine--tRNA ligase (876 aa).

A disordered region spans residues 1–20 (MATERYNPRDAEPRWQQKWN). The 'HIGH' region signature appears at 43 to 53 (PYPSGRIHMGH). The short motif at 632 to 636 (KMSKS) is the 'KMSKS' region element. Position 635 (K635) interacts with ATP.

This sequence belongs to the class-I aminoacyl-tRNA synthetase family.

It localises to the cytoplasm. It catalyses the reaction tRNA(Leu) + L-leucine + ATP = L-leucyl-tRNA(Leu) + AMP + diphosphate. This chain is Leucine--tRNA ligase, found in Rhizobium leguminosarum bv. trifolii (strain WSM2304).